The primary structure comprises 329 residues: Neuropeptides B/W receptor type 1 (329 aa).

Topologically, residues 1 to 39 (MHNLSLFEPGRGNVSCGGPFLGCPNESNPAPLPLPQPLA) are extracellular. N-linked (GlcNAc...) asparagine glycans are attached at residues asparagine 3, asparagine 13, and asparagine 25. The chain crosses the membrane as a helical span at residues 40–63 (VAVPVVYGVICAVGLAGNSAVLYV). Residues 64-74 (LLRTPRMKTVT) are Cytoplasmic-facing. A helical transmembrane segment spans residues 75–99 (NVFILNLAIADELFTLVLPINIADF). Residues 100–114 (LLRRWPFGEVMCKLI) are Extracellular-facing. Cysteine 111 and cysteine 190 are disulfide-bonded. The chain crosses the membrane as a helical span at residues 115 to 134 (VAVDQYNTFSSLYFLAVMSA). The Cytoplasmic portion of the chain corresponds to 135–159 (DRYLVVLATAESRRVSGRTYGAARA). A helical transmembrane segment spans residues 160-179 (VSLAVWALVTLVVLPFAVFA). At 180-204 (RLDEEQGRRQCVLVFPQPEAFWWRA) the chain is on the extracellular side. Residues 205-226 (SRLYTLVLGFAIPVSTICALYI) form a helical membrane-spanning segment. The Cytoplasmic portion of the chain corresponds to 227–250 (TLLCRLRAIQLDSHAKALDRAKKR). Residues 251-275 (VTLLVVAILAVCLLCWTPYHLSTIV) traverse the membrane as a helical segment. The Extracellular portion of the chain corresponds to 276–285 (ALTTDLPQTP). The helical transmembrane segment at 286 to 300 (LVIGISYFITSLSYA) threads the bilayer. Residues 301–329 (NSCLNPFLYAFLDDSFRRSLRQLVSCRTA) are Cytoplasmic-facing.

This sequence belongs to the G-protein coupled receptor 1 family.

The protein resides in the cell membrane. Its function is as follows. Interacts specifically with a number of opioid ligands. Receptor for neuropeptides B and W, which may be involved in neuroendocrine system regulation, food intake and the organization of other signals. The sequence is that of Neuropeptides B/W receptor type 1 (Npbwr1) from Rattus norvegicus (Rat).